A 379-amino-acid chain; its full sequence is Dihydroorotate dehydrogenase (quinone) (379 aa).

FMN is bound by residues 79 to 83 (AGCDK) and A103. Position 83 (K83) interacts with substrate. A substrate-binding site is contributed by 128 to 131 (NRLG). 2 residues coordinate FMN: N160 and N193. N193 serves as a coordination point for substrate. Residue S196 is the Nucleophile of the active site. Position 198 (N198) interacts with substrate. 2 residues coordinate FMN: K231 and T259. 260-261 (NT) serves as a coordination point for substrate. FMN-binding positions include G289, G318, and 339 to 340 (YT).

The protein belongs to the dihydroorotate dehydrogenase family. Type 2 subfamily. As to quaternary structure, monomer. The cofactor is FMN.

It is found in the cell membrane. The catalysed reaction is (S)-dihydroorotate + a quinone = orotate + a quinol. It participates in pyrimidine metabolism; UMP biosynthesis via de novo pathway; orotate from (S)-dihydroorotate (quinone route): step 1/1. In terms of biological role, catalyzes the conversion of dihydroorotate to orotate with quinone as electron acceptor. The protein is Dihydroorotate dehydrogenase (quinone) of Crocosphaera subtropica (strain ATCC 51142 / BH68) (Cyanothece sp. (strain ATCC 51142)).